Reading from the N-terminus, the 332-residue chain is L-lactate dehydrogenase A chain (332 aa).

Residues 29 to 57 and Arg99 each bind NAD(+); that span reads GAVG…IEDK. Residues Arg106, Asn138, and Arg169 each contribute to the substrate site. Position 138 (Asn138) interacts with NAD(+). Catalysis depends on His193, which acts as the Proton acceptor. Residue Thr248 coordinates substrate.

The protein belongs to the LDH/MDH superfamily. LDH family. In terms of assembly, homotetramer.

Its subcellular location is the cytoplasm. It catalyses the reaction (S)-lactate + NAD(+) = pyruvate + NADH + H(+). It functions in the pathway fermentation; pyruvate fermentation to lactate; (S)-lactate from pyruvate: step 1/1. Functionally, interconverts simultaneously and stereospecifically pyruvate and lactate with concomitant interconversion of NADH and NAD(+). In Sceloporus woodi (Florida scrub lizard), this protein is L-lactate dehydrogenase A chain (LDHA).